Reading from the N-terminus, the 296-residue chain is GTP cyclohydrolase FolE2 (296 aa).

This sequence belongs to the GTP cyclohydrolase IV family.

The enzyme catalyses GTP + H2O = 7,8-dihydroneopterin 3'-triphosphate + formate + H(+). It functions in the pathway cofactor biosynthesis; 7,8-dihydroneopterin triphosphate biosynthesis; 7,8-dihydroneopterin triphosphate from GTP: step 1/1. Functionally, converts GTP to 7,8-dihydroneopterin triphosphate. This is GTP cyclohydrolase FolE2 from Ectopseudomonas mendocina (strain ymp) (Pseudomonas mendocina).